Consider the following 159-residue polypeptide: Cyclin-dependent kinase inhibitor 1 (159 aa).

Position 2 is an N-acetylserine (Ser2). Ser2 is covalently cross-linked (Glycyl serine ester (Ser-Gly) (interchain with G-Cter in ubiquitin)). Residues 12–40 (HRSKVCRCLFGPVDSEQLRRDCDALMAGC) form a C4-type zinc finger. Positions 17–24 (CRCLFGPV) are required for binding cyclins. Residues 53–58 (VTETPL) form a required for binding CDKs region. Ser78 is subject to Phosphoserine; by NUAK1. Positions 78–106 (SPGSRSRDDLGGDKRPSTSSALLQGPAPE) are disordered. The segment covering 82–93 (RSRDDLGGDKRP) has biased composition (basic and acidic residues). Residue Ser112 is modified to Phosphoserine; by GSK3-beta. The segment at 118 to 142 (VSERPEDSPGGPGTSQGRKRRQTSL) is disordered. Position 125 is a phosphoserine (Ser125). The PIP-box K+4 motif motif lies at 135-159 (RKRRQTSLTDFYHSKRRLVFCKRKP). Phosphothreonine; by PKA, PKB/AKT1, PIM1 and PIM2 is present on Thr140. At Ser141 the chain carries Phosphoserine; by NUAK1. An interaction with TRIM39 region spans residues 147 to 159 (HSKRRLVFCKRKP).

The protein belongs to the CDI family. As to quaternary structure, interacts with HDAC1; the interaction is prevented by competitive binding of C10orf90/FATS to HDAC1 facilitating acetylation and protein stabilization of CDKN1A/p21. Interacts with MKRN1. Interacts with PSMA3. Interacts with PCNA. Component of the ternary complex, cyclin D-CDK4-CDKN1A. Interacts (via its N-terminal domain) with CDK4; the interaction promotes the assembly of the cyclin D-CDK4 complex, its nuclear translocation and promotes the cyclin D-dependent enzyme activity of CDK4. Binding to CDK2 leads to CDK2/cyclin E inactivation at the G1-S phase DNA damage checkpoint, thereby arresting cells at the G1-S transition during DNA repair. Interacts with PIM1. Interacts with STK11. Interacts with NUAK1. Interacts with DTL and TRIM39. Interacts with PKP3; the interaction sequesters CDKN1A to the cytoplasm thereby repressing its role as an inhibitor of CDK4- and CDK6-driven RB1 phosphorylation. Post-translationally, phosphorylation of Thr-140 or Ser-141 impairs binding to PCNA. Phosphorylation at Ser-112 by GSK3-beta enhances ubiquitination by the DCX(DTL) complex. Phosphorylation of Thr-140 by PIM2 enhances its stability and inhibits cell proliferation. Phosphorylation of Thr-140 by PIM1 results in the relocation of CDKN1A to the cytoplasm and enhanced CDKN1A protein stability. UV radiation-induced phosphorylation at Ser-78 and Ser-141 by NUAK1 leads to its degradation. Ubiquitinated by MKRN1; leading to polyubiquitination and 26S proteasome-dependent degradation. Ubiquitinated by the DCX(DTL) complex, also named CRL4(CDT2) complex, leading to its degradation during S phase or following UV irradiation. Ubiquitination by the DCX(DTL) complex is essential to control replication licensing and is PCNA-dependent: interacts with PCNA via its PIP-box, while the presence of the containing the 'K+4' motif in the PIP box, recruit the DCX(DTL) complex, leading to its degradation. Ubiquitination at Ser-2 leads to degradation by the proteasome pathway. Ubiquitinated by RNF114; leading to proteasomal degradation. In terms of processing, acetylation leads to protein stability. Acetylated in vitro on Lys-136, Lys-149, Lys-156 and Lys-158. Deacetylation by HDAC1 is prevented by competitive binding of C10orf90/FATS to HDAC1. Expressed in keratinocytes (at protein level).

The protein localises to the cytoplasm. It is found in the nucleus. Its function is as follows. May be involved in p53/TP53 mediated inhibition of cellular proliferation in response to DNA damage. Binds to and inhibits cyclin-dependent kinase activity, preventing phosphorylation of critical cyclin-dependent kinase substrates and blocking cell cycle progression. Functions in the nuclear localization and assembly of cyclin D-CDK4 complex and promotes its kinase activity towards RB1. At higher stoichiometric ratios, inhibits the kinase activity of the cyclin D-CDK4 complex. Inhibits DNA synthesis by DNA polymerase delta by competing with POLD3 for PCNA binding. Plays an important role in controlling cell cycle progression and DNA damage-induced G2 arrest. Plays an important role in controlling cell cycle progression and DNA damage-induced G2 arrest. Involved in p53/TP53 mediated inhibition of cellular proliferation in response to DNA damage. Also involved in p53-independent DNA damage-induced G2 arrest mediated by CREB3L1 in astrocytes and osteoblasts. Binds to and inhibits cyclin-dependent kinase activity, preventing phosphorylation of critical cyclin-dependent kinase substrates and blocking cell cycle progression. Functions in the nuclear localization and assembly of cyclin D-CDK4 complex and promotes its kinase activity towards RB1. At higher stoichiometric ratios, inhibits the kinase activity of the cyclin D-CDK4 complex. Inhibits DNA synthesis by DNA polymerase delta by competing with POLD3 for PCNA binding. Negatively regulates the CDK4- and CDK6-driven phosphorylation of RB1 in keratinocytes, thereby resulting in the release of E2F1 and subsequent transcription of E2F1-driven G1/S phase promoting genes. This Mus musculus (Mouse) protein is Cyclin-dependent kinase inhibitor 1 (Cdkn1a).